Reading from the N-terminus, the 257-residue chain is Short chain dehydrogenase prhI (257 aa).

The chain crosses the membrane as a helical span at residues 7 to 29; it reads HVVIITGSSSGIGLAASTLALAS. I11 provides a ligand contact to NADP(+). N50 is a glycosylation site (N-linked (GlcNAc...) asparagine). An NADP(+)-binding site is contributed by D57. N92 and N110 each carry an N-linked (GlcNAc...) asparagine glycan. NADP(+) is bound by residues R119, Y151, K155, and V184. The Proton acceptor role is filled by Y151. K155 functions as the Lowers pKa of active site Tyr in the catalytic mechanism.

This sequence belongs to the short-chain dehydrogenases/reductases (SDR) family.

The protein resides in the membrane. The enzyme catalyses protoaustinoid A + A = protoaustinoid B + AH2. Its pathway is secondary metabolite biosynthesis; terpenoid biosynthesis. Functionally, short chain dehydrogenase; part of the gene cluster that mediates the biosynthesis of paraherquonin, a meroterpenoid with a unique, highly congested hexacyclic molecular architecture. The first step of the pathway is the synthesis of 3,5-dimethylorsellinic acid (DMOA) by the polyketide synthase prhL. Synthesis of DMOA is followed by farnesylation by the prenyltransferase prhE, methylesterification by the methyl-transferase prhM, epoxidation of the prenyl chain by the flavin-dependent monooxygenase prhF, and cyclization of the farnesyl moiety by the terpene cyclase prhH, to yield the tetracyclic intermediate, protoaustinoid A. The short chain dehydrogenase prhI then oxidizes the C-3 alcohol group of the terpene cyclase product to transform protoaustinoid A into protoaustinoid B. The FAD-binding monooxygenase prhJ catalyzes the oxidation of protoaustinoid B into preaustinoid A which is further oxidized into preaustinoid A1 by FAD-binding monooxygenase phrK. Finally, prhA leads to berkeleydione via the berkeleyone B intermediate. PrhA is a multifunctional dioxygenase that first desaturates at C5-C6 to form berkeleyone B, followed by rearrangement of the A/B-ring to form the cycloheptadiene moiety in berkeleydione. Berkeleydione serves as the key intermediate for the biosynthesis of paraherquonin as well as many other meroterpenoids. The cytochrome P450 monooxygenases prhB, prhD, and prhN, as well as the isomerase prhC, are probably involved in the late stage of paraherquonin biosynthesis, after the production of berkeleydione. Especially prhC might be a multifunctional enzyme that catalyzes the D-ring expansion via intramolecular methoxy rearrangement, as well as the hydrolysis of the expanded D-ring. This chain is Short chain dehydrogenase prhI, found in Penicillium brasilianum.